Here is a 290-residue protein sequence, read N- to C-terminus: Ribonuclease HIII (290 aa).

Residues 78–290 enclose the RNase H type-2 domain; the sequence is LPLIGTDEVG…FKNTEKAKNA (213 aa). Asp84, Glu85, and Asp187 together coordinate a divalent metal cation.

The protein belongs to the RNase HII family. RnhC subfamily. The cofactor is Mn(2+). Mg(2+) serves as cofactor.

Its subcellular location is the cytoplasm. It catalyses the reaction Endonucleolytic cleavage to 5'-phosphomonoester.. Its function is as follows. Endonuclease that specifically degrades the RNA of RNA-DNA hybrids. The chain is Ribonuclease HIII from Streptococcus pneumoniae (strain CGSP14).